A 111-amino-acid chain; its full sequence is Microtubule nucleation factor SSNA1 (111 aa).

Residues 6–71 are a coiled coil; sequence QALQNHNNEL…ARKTETKNEY (66 aa).

This sequence belongs to the SSNA1 family. As to quaternary structure, self-assembles into fibrils in a head-to-tail fashion.

Its subcellular location is the cytoplasm. It is found in the cytoskeleton. The protein resides in the flagellum basal body. It localises to the flagellum axoneme. Microtubule-binding protein which stabilizes dynamic microtubules by slowing growth and shrinkage at both plus and minus ends and serves as a sensor of microtubule damage. Induces microtubule branching which is mediated by the formation of long SSNA1 fibrils which guide microtubule protofilaments to split apart from the mother microtubule and form daughter microtubules. Required for cell division. The chain is Microtubule nucleation factor SSNA1 from Chlamydomonas reinhardtii (Chlamydomonas smithii).